A 696-amino-acid chain; its full sequence is Gametogenetin-binding protein 2 (696 aa).

Phosphoserine is present on Ser360.

Interacts with GGN.

The protein resides in the cytoplasmic vesicle. In terms of biological role, may be involved in spermatogenesis. The sequence is that of Gametogenetin-binding protein 2 (Ggnbp2) from Rattus norvegicus (Rat).